Consider the following 131-residue polypeptide: Large ribosomal subunit protein bL19 (131 aa).

The tract at residues 110-131 is disordered; it reads KSARIAERTDDRAKKAKATAAE. Residues 113-122 show a composition bias toward basic and acidic residues; that stretch reads RIAERTDDRA.

Belongs to the bacterial ribosomal protein bL19 family.

Its function is as follows. This protein is located at the 30S-50S ribosomal subunit interface and may play a role in the structure and function of the aminoacyl-tRNA binding site. The chain is Large ribosomal subunit protein bL19 from Azorhizobium caulinodans (strain ATCC 43989 / DSM 5975 / JCM 20966 / LMG 6465 / NBRC 14845 / NCIMB 13405 / ORS 571).